Consider the following 856-residue polypeptide: Translation initiation factor IF-2 (856 aa).

The 171-residue stretch at 356–526 (PRAPVVTVMG…LLIADLLELK (171 aa)) folds into the tr-type G domain. Residues 365–372 (GHVDHGKT) form a G1 region. 365–372 (GHVDHGKT) lines the GTP pocket. Residues 390–394 (GITQH) are G2. Residues 412-415 (DTPG) are G3. Residues 412–416 (DTPGH) and 466–469 (NKID) each bind GTP. A G4 region spans residues 466 to 469 (NKID). The G5 stretch occupies residues 502-504 (SAK).

This sequence belongs to the TRAFAC class translation factor GTPase superfamily. Classic translation factor GTPase family. IF-2 subfamily.

The protein localises to the cytoplasm. Its function is as follows. One of the essential components for the initiation of protein synthesis. Protects formylmethionyl-tRNA from spontaneous hydrolysis and promotes its binding to the 30S ribosomal subunits. Also involved in the hydrolysis of GTP during the formation of the 70S ribosomal complex. The polypeptide is Translation initiation factor IF-2 (Ehrlichia ruminantium (strain Welgevonden)).